We begin with the raw amino-acid sequence, 270 residues long: uncharacterized protein (270 aa).

Residues 235–270 (LADSDLEADSDDSESFEFVENPEPSENGSEPTIKND) are disordered. Over residues 238–251 (SDLEADSDDSESFE) the composition is skewed to acidic residues. Residues 255 to 270 (NPEPSENGSEPTIKND) are compositionally biased toward low complexity.

This is an uncharacterized protein from Halorubrum sp. PV6 (HRPV-1).